Consider the following 394-residue polypeptide: MAAETFLFTSESVNEGHPDKLCDQVSDAVLDACLAQDPDSKVACETCTKTNMVMVFGEITTKATVDYEKIVRDTCRDIGFISDDVGLDADHCKVLVNIEQQSPDIAQGVHGHFTKRPEEVGAGDQGIMFGYATDETPELMPLTHMLATKLGARLTEVRKNGTCAWLRPDGKTQVTIEYLNEGGAMVPVRVHTVLISTQHDETVTNDEIAADLKEHVIKPVIPGKYLDENTIFHLNPSGRFVIGGPHGDAGLTGRKIIIDTYGGWGAHGGGAFSGKDPTKVDRSGAYIARQAAKSIIASGLARRCIVQISYAIGVPEPLSVFVDSYGTGKIPDREILKLVKENFDFRPGMISINLDLKKGGKRFIKTAAYGHFGRDDADFTWEVVKPLKFDKASA.

Glu11 is a Mg(2+) binding site. His17 serves as a coordination point for ATP. A K(+)-binding site is contributed by Glu45. L-methionine contacts are provided by Glu58 and Gln101. ATP is bound by residues 169 to 171 (DGK), 237 to 240 (SGRF), Asp248, 254 to 255 (RK), Ala271, Lys275, and Lys279. L-methionine is bound at residue Asp248. Lys279 contacts L-methionine.

It belongs to the AdoMet synthase family. As to quaternary structure, homotetramer. The cofactor is Mn(2+). Mg(2+) is required as a cofactor. It depends on Co(2+) as a cofactor. K(+) serves as cofactor.

The protein localises to the cytoplasm. It catalyses the reaction L-methionine + ATP + H2O = S-adenosyl-L-methionine + phosphate + diphosphate. It participates in amino-acid biosynthesis; S-adenosyl-L-methionine biosynthesis; S-adenosyl-L-methionine from L-methionine: step 1/1. Catalyzes the formation of S-adenosylmethionine from methionine and ATP. The reaction comprises two steps that are both catalyzed by the same enzyme: formation of S-adenosylmethionine (AdoMet) and triphosphate, and subsequent hydrolysis of the triphosphate. This Hordeum vulgare (Barley) protein is S-adenosylmethionine synthase 2 (SAM2).